The following is a 481-amino-acid chain: FAD-linked oxidoreductase afoF (481 aa).

The signal sequence occupies residues 1 to 16 (MRFLLQSITLVAAARA). Residues 52-227 (SEWRPPTWTG…TAATFKMFDQ (176 aa)) enclose the FAD-binding PCMH-type domain. N-linked (GlcNAc...) asparagine glycosylation is present at Asn82. At His92 the chain carries Pros-8alpha-FAD histidine. N-linked (GlcNAc...) asparagine glycosylation is found at Asn196, Asn241, Asn276, Asn309, Asn312, and Asn376.

It belongs to the oxygen-dependent FAD-linked oxidoreductase family. FAD is required as a cofactor.

Functionally, FAD-linked oxidoreductase; part of the gene cluster that mediates the biosynthesis of asperfuranone, a probable antitumor agent. The polyketide synthase afoG is responsible for producing the 3,5-dimethyloctadienone moiety from acetyl-CoA, three malonyl-CoA, and two S-adenosyl methionines (SAM). The 3,5-dimethyloctadienone moiety is then loaded onto the SAT domain of afoE and extended with four malonyl-CoA and one SAM, which leads to the formation of 2,4-dihydroxy-6-(5,7-dimethyl-2-oxo-trans-3-trans-5-nonadienyl)-3-methylbenzaldehyde (compound 2) after reductive release and aldol condensation. AfoD is the next enzyme in the biosynthesis sequence and hydroxylates the side chain at the benzylic position of compound 2. After benzylic hydroxylation, a furan ring is formed after five-member ring hemiacetal formation and water elimination. AfoF and afoC are proposed to oxidize the R-diketone proton and to reduce the unconjugated carbonyl group, respectively, to generate asperfuranone. Since no intermediates could be isolated from afoF and afoC deletants, the sequence of these two enzymes is not fully understood. Moreover, since afoC deletant still produces a small amount of asperfuranone, other endogenous oxidoreductases might catalyze the same reaction with much less efficiency. This chain is FAD-linked oxidoreductase afoF, found in Emericella nidulans (strain FGSC A4 / ATCC 38163 / CBS 112.46 / NRRL 194 / M139) (Aspergillus nidulans).